We begin with the raw amino-acid sequence, 452 residues long: Probable ECA polymerase (452 aa).

The next 11 helical transmembrane spans lie at 6–26, 37–57, 63–83, 118–138, 155–175, 181–201, 207–227, 228–248, 341–361, 378–398, and 410–430; these read FSGLLVVWLLSTLFIATLTWF, VFFSLLFLLTFFFGFPLTSVL, VGVAPPEILLQALLSAACFYG, VILMGIALVSVAIFFMHNGFL, GVALKRFFYFFIPAMLVVYFL, AWLFFLVSTVAFGLLTYMIVG, IIIAFAIFLFIGIIRGWISLW, MLAAAGVLGIVGMFWLALKRY, LVVMGGALFIPLGAIVVGMII, YKAAILHSFCFGAIFNMIVLA, and VFFLVVFGASLLVAKLLFWLF.

Belongs to the WzyE family. In terms of assembly, probably part of a complex composed of WzxE, WzyE and WzzE.

Its subcellular location is the cell inner membrane. It participates in bacterial outer membrane biogenesis; enterobacterial common antigen biosynthesis. Probably involved in the polymerization of enterobacterial common antigen (ECA) trisaccharide repeat units. The sequence is that of Probable ECA polymerase from Salmonella newport (strain SL254).